We begin with the raw amino-acid sequence, 115 residues long: Nucleoid-associated protein Npun_F0448 (115 aa).

This sequence belongs to the YbaB/EbfC family. Homodimer.

The protein localises to the cytoplasm. It localises to the nucleoid. Functionally, binds to DNA and alters its conformation. May be involved in regulation of gene expression, nucleoid organization and DNA protection. The chain is Nucleoid-associated protein Npun_F0448 from Nostoc punctiforme (strain ATCC 29133 / PCC 73102).